The chain runs to 1666 residues: Complement C3 (1666 aa).

The signal sequence occupies residues 1–22 (MGPAAGPSLLLLLLASVSLALG). Residues serine 70, serine 296, and serine 302 each carry the phosphoserine modification. Cystine bridges form between cysteine 557-cysteine 821, cysteine 630-cysteine 666, cysteine 698-cysteine 725, cysteine 699-cysteine 732, cysteine 712-cysteine 733, cysteine 878-cysteine 1517, cysteine 1106-cysteine 1163, cysteine 1363-cysteine 1493, cysteine 1394-cysteine 1462, cysteine 1510-cysteine 1515, cysteine 1522-cysteine 1593, cysteine 1540-cysteine 1664, and cysteine 1640-cysteine 1649. Serine 676 carries the phosphoserine modification. In terms of domain architecture, Anaphylatoxin-like spans 698–733 (CCEDGMRENPMQFSCQRRARYVSLGEACVKAFLDCC). An N-linked (GlcNAc...) asparagine glycan is attached at asparagine 944. At serine 973 the chain carries Phosphoserine. Residues 1015–1018 (CGEQ) constitute a cross-link (isoglutamyl cysteine thioester (Cys-Gln)). Serine 1326 carries the post-translational modification Phosphoserine. The NTR domain maps to 1522–1664 (CFIQLPEKIT…FTENMVVFGC (143 aa)). Serine 1576 carries the post-translational modification Phosphoserine. Residue asparagine 1620 is glycosylated (N-linked (GlcNAc...) asparagine). The tract at residues 1637-1662 (AEECQDEENQQQCQDLGTFTENMVVF) is interaction with CFP/properdin.

In terms of assembly, in absence of complement activation, the C3 precursor is first processed by the removal of 4 Arg residues, forming two chains, beta and alpha, linked by a disulfide bond. As to quaternary structure, complement C3b is composed of complement C3b and complement C3 beta chains that are associated via disulfide bonds. Non-enzymatic component of the C5 convertase, also named C4bC2bC3b, composed of the serine protease complement C2b (C2), complement C3b, as well as complement C4b (C4). Non-enzymatic component of the C5 convertase of the alternative complement pathways composed of the serine protease complement CFB and complement C3b. Interacts with CFP; interaction takes place together with CFB in the alternative complement system and allows the complex to become active. Interacts with CR1 (via Sushi 8 and Sushi 9 domains). Interacts with CFH. Interacts with CFH. Interacts with CR2. In terms of assembly, during pregnancy, C3dg exists as a complex (probably a 2:2:2 heterohexamer) with AGT and the proform of PRG2. Interacts with CR2 (via the N-terminal Sushi domains 1 and 2). In terms of processing, C3 precursor is first processed by the removal of 4 Arg residues, forming two chains, beta and alpha, linked by a disulfide bond. During activation of the complement systems, the alpha chain is cleaved into C3a and C3b by the C3 convertase: C3b stays linked to the beta chain, while C3a is released in the plasma. The alpha chain is cleaved by the serine protease complement C2b component of the C3 convertase to generate C3a and C3b following activation by the classical, lectin and GZMK complement systems. The alpha chain is cleaved by CFB component of the C3 convertase to generate C3a and C3b following activation by the alternative complement system. C3a is further processed by carboxypeptidases to release the C-terminal arginine residue generating the acylation stimulating protein (ASP). Levels of ASP are increased in adipocytes in the postprandial period and by insulin and dietary chylomicrons. Post-translationally, complement C3b is rapidly split in two positions by factor I (CFI) and a cofactor (CFH) to form iC3b (inactivated C3b) and C3f which is released. CFI and CFH catalyze proteolytic degradation of already-deposited complement C3b. Then iC3b is slowly cleaved (possibly by CFI) to form C3c (beta chain + alpha' chain fragment 1 + alpha' chain fragment 2), C3dg and C3f. Other proteases produce other fragments such as C3d or C3g. In terms of processing, upon activation, the internal thioester bond reacts with carbohydrate antigens on the target surface to form amide or ester bonds, leading to covalent association with the surface of pathogens. Complement C3b interacts with complement C4b via a thioester linkage. Post-translationally, phosphorylated by FAM20C in the extracellular medium.

It localises to the secreted. The protein resides in the cell surface. Complement activation is inhibited by VSIG4. In terms of biological role, precursor of non-enzymatic components of the classical, alternative, lectin and GZMK complement pathways, which consist in a cascade of proteins that leads to phagocytosis and breakdown of pathogens and signaling that strengthens the adaptive immune system. Its function is as follows. Non-enzymatic component of C5 convertase. Generated following cleavage by C3 convertase, it covalently attaches to the surface of pathogens, where it acts as an opsonin that marks the surface of antigens for removal. Complement C3b binds covalently via its reactive thioester, to cell surface carbohydrates or immune aggregates. Together with complement C4b, it then recruits the serine protease complement C2b to form the C5 convertase, which cleaves and activate C5, the next component of the complement pathways. In the alternative complement pathway, recruits the serine protease CFB to form the C5 convertase that cleaves and activates C5. Functionally, mediator of local inflammatory process released following cleavage by C3 convertase. Acts by binding to its receptor, C3AR1, activating G protein-coupled receptor signaling, promoting the phosphorylation, ARRB2-mediated internalization and endocytosis of C3AR1. C3a anaphylatoxin stimulates the activation of immune cells such as mast cells and basophilic leukocytes to release inflammation agents, such as cytokines, chemokines and histamine, which promote inflammation development. Also acts as potent chemoattractant for the migration of macrophages and neutrophils to the inflamed tissues, resulting in neutralization of the inflammatory triggers by multiple ways, such as phagocytosis and generation of reactive oxidants. Adipogenic hormone that stimulates triglyceride synthesis and glucose transport in adipocytes, regulating fat storage and playing a role in postprandial triglyceride clearance. Appears to stimulate triglyceride synthesis via activation of the PLC, MAPK and AKT signaling pathways. Acts by binding to its receptor, C5AR2, activating G protein-coupled receptor signaling, promoting the phosphorylation, ARRB2-mediated internalization and endocytosis of C5AR2. In terms of biological role, acts as a chemoattractant for neutrophils in chronic inflammation. The polypeptide is Complement C3 (Cavia porcellus (Guinea pig)).